A 317-amino-acid polypeptide reads, in one-letter code: Olfactory receptor 10A5 (317 aa).

Topologically, residues 1 to 26 (MAIGNWTEISEFILMSFSSLPTEIQS) are extracellular. N-linked (GlcNAc...) asparagine glycosylation is present at asparagine 5. A helical transmembrane segment spans residues 27–47 (LLFLTFLTIYLVTLKGNSLII). The Cytoplasmic segment spans residues 48–55 (LVTLADPM). The helical transmembrane segment at 56–76 (LHSPMYFFLRNLSFLEIGFNL) threads the bilayer. Over 77-100 (VIVPKMLGTLLAQDTTISFLGCAT) the chain is Extracellular. Cysteine 98 and cysteine 190 are disulfide-bonded. Residues 101–121 (QMYFFFFFGVAECFLLATMAY) traverse the membrane as a helical segment. Residues 122–140 (DRYVAICSPLHYPVIMNQR) are Cytoplasmic-facing. A helical transmembrane segment spans residues 141 to 161 (TRAKLAAASWFPGFPVATVQT). The Extracellular portion of the chain corresponds to 162–198 (TWLFSFPFCGTNKVNHFFCDSPPVLKLVCADTALFEI). Residues 199-218 (YAIVGTILVVMIPCLLILCS) traverse the membrane as a helical segment. Residues 219 to 238 (YTRIAAAILKIPSAKGKHKA) lie on the Cytoplasmic side of the membrane. Residues 239–259 (FSTCSSHLLVVSLFYISSSLT) form a helical membrane-spanning segment. The Extracellular portion of the chain corresponds to 260–272 (YFWPKSNNSPESK). Residues 273–293 (KLLSLSYTVVTPMLNPIIYSL) traverse the membrane as a helical segment. At 294–317 (RNSEVKNALSRTFHKVLALRNCIP) the chain is on the cytoplasmic side.

This sequence belongs to the G-protein coupled receptor 1 family. In terms of tissue distribution, expressed in the tongue.

Its subcellular location is the cell membrane. Odorant receptor (Potential). May be involved in taste perception. This is Olfactory receptor 10A5 (OR10A5) from Homo sapiens (Human).